The chain runs to 332 residues: DNA-directed RNA polymerase subunit alpha (332 aa).

The segment at 1–234 (MTVTISQVLR…DQLSVFGDFT (234 aa)) is alpha N-terminal domain (alpha-NTD). An alpha C-terminal domain (alpha-CTD) region spans residues 248–332 (VDPVLLRPID…PGVSQYGMLG (85 aa)).

The protein belongs to the RNA polymerase alpha chain family. Homodimer. The RNAP catalytic core consists of 2 alpha, 1 beta, 1 beta' and 1 omega subunit. When a sigma factor is associated with the core the holoenzyme is formed, which can initiate transcription.

It catalyses the reaction RNA(n) + a ribonucleoside 5'-triphosphate = RNA(n+1) + diphosphate. Functionally, DNA-dependent RNA polymerase catalyzes the transcription of DNA into RNA using the four ribonucleoside triphosphates as substrates. This Xylella fastidiosa (strain M12) protein is DNA-directed RNA polymerase subunit alpha.